Consider the following 260-residue polypeptide: Methionine-rich nacre protein (260 aa).

The N-terminal stretch at 1 to 19 (MRRILCLAVVIFIINDVSS) is a signal peptide. Residues 23–75 (GSNKNWKKSGMSLSSPGNKKPTGNNNAVPQKSKMNNVNQNSLSQPKRPSHPGN) are disordered. The segment covering 33 to 68 (MSLSSPGNKKPTGNNNAVPQKSKMNNVNQNSLSQPK) has biased composition (polar residues).

As to expression, expressed in mantle distal zone, mantle margin and grafted pearl pockets. Not expressed in adductor muscle, gills, hemocytes or ungrafted pearl pockets. Within the mantle, specifically expressed in mineralizing outer epithelium cells (at protein level). After secretion incorporated into acid-insoluble nacre matrix of shell and pearl (at protein level). Not found in acid-insoluble matrix of shell prisms (at protein level).

The protein localises to the secreted. This chain is Methionine-rich nacre protein, found in Margaritifera margaritifera (Freshwater pearl mussel).